Reading from the N-terminus, the 549-residue chain is Oxygen-dependent choline dehydrogenase (549 aa).

4–33 (DYVIVGSGSAGSAIAYRLSEDGRYSVIVIE) contacts FAD. Histidine 465 acts as the Proton acceptor in catalysis. The segment at 528-549 (KTPLPRSNQEPWVNPRAAVSDR) is disordered.

This sequence belongs to the GMC oxidoreductase family. FAD is required as a cofactor.

It carries out the reaction choline + A = betaine aldehyde + AH2. The catalysed reaction is betaine aldehyde + NAD(+) + H2O = glycine betaine + NADH + 2 H(+). The protein operates within amine and polyamine biosynthesis; betaine biosynthesis via choline pathway; betaine aldehyde from choline (cytochrome c reductase route): step 1/1. Involved in the biosynthesis of the osmoprotectant glycine betaine. Catalyzes the oxidation of choline to betaine aldehyde and betaine aldehyde to glycine betaine at the same rate. This chain is Oxygen-dependent choline dehydrogenase, found in Agrobacterium fabrum (strain C58 / ATCC 33970) (Agrobacterium tumefaciens (strain C58)).